Consider the following 262-residue polypeptide: Acyl-[acyl-carrier-protein]--UDP-N-acetylglucosamine O-acyltransferase (262 aa).

The protein belongs to the transferase hexapeptide repeat family. LpxA subfamily. As to quaternary structure, homotrimer.

The protein resides in the cytoplasm. The enzyme catalyses a (3R)-hydroxyacyl-[ACP] + UDP-N-acetyl-alpha-D-glucosamine = a UDP-3-O-[(3R)-3-hydroxyacyl]-N-acetyl-alpha-D-glucosamine + holo-[ACP]. It participates in glycolipid biosynthesis; lipid IV(A) biosynthesis; lipid IV(A) from (3R)-3-hydroxytetradecanoyl-[acyl-carrier-protein] and UDP-N-acetyl-alpha-D-glucosamine: step 1/6. Functionally, involved in the biosynthesis of lipid A, a phosphorylated glycolipid that anchors the lipopolysaccharide to the outer membrane of the cell. This Salmonella paratyphi B (strain ATCC BAA-1250 / SPB7) protein is Acyl-[acyl-carrier-protein]--UDP-N-acetylglucosamine O-acyltransferase.